The following is a 251-amino-acid chain: UPF0309 protein SAV_3856 (251 aa).

In terms of domain architecture, SIS spans 36–220; sequence IADTVADGGR…AGTLADRGIE (185 aa).

This sequence belongs to the UPF0309 family.

This is UPF0309 protein SAV_3856 from Streptomyces avermitilis (strain ATCC 31267 / DSM 46492 / JCM 5070 / NBRC 14893 / NCIMB 12804 / NRRL 8165 / MA-4680).